Reading from the N-terminus, the 507-residue chain is WD-40 repeat-containing protein MSI4 (507 aa).

Methionine 1 is modified (N-acetylmethionine). The disordered stretch occupies residues 1–66 (MESDEAAAVS…KTQQSPSVDE (66 aa)). WD repeat units lie at residues 95 to 137 (RWGP…KPRV), 162 to 202 (IHPG…NRHA), and 217 to 257 (GHQD…TTIG). The span at 258–272 (TDSKSSGSIIKQTGE) shows a compositional bias: polar residues. The disordered stretch occupies residues 258–282 (TDSKSSGSIIKQTGEGTDKNESPTV). WD repeat units follow at residues 290-330 (GHED…NPVT), 335-375 (AHDA…ANGV), 384-424 (GHKA…KKSD), and 439-486 (GHRD…YRPE). The DWD box motif lies at 308–323 (FCSVGDDSCLILWDAR).

This sequence belongs to the WD repeat RBAP46/RBAP48/MSI1 family. In terms of assembly, interacts with AHL16 and HOS1. Interacts with LHP1, PDP1, PDP2 and PDP3. Component of the PRC2 (polycomb repressive complex 2) complex which regulates histone methylation on histone H3K27. As to expression, expressed in rosette leaves, cauline leaves, main stems and developing fruits. Expressed at higher levels in roots and flowers.

The protein localises to the nucleus. Its function is as follows. Core histone-binding subunit that may target chromatin assembly factors, chromatin remodeling factors and histone deacetylases to their histone substrates in a manner that is regulated by nucleosomal DNA. Component of the flowering autonomous pathway which positively regulates flowering by promoting transcriptional repression of the flowering repressor FLC. May promote histone deacetylation at the FLC locus leading to the formation of repressive chromatin structures. Forms a histone deacetylase complex with HDA5, HDA6 and FLD that represses FLC gene expression to control flowering time. Also negatively regulates cold-responsive genes. Acts together with PDP1 and MSI5 to regulate the function of the PRC2 complex on FLC. Required for systemic acquired resistance (SAR) toward pathogenic bacteria (e.g. Pseudomonas syringae pv tomato DC3000 (avrPto)). Together with FLD and MSI4/FVE, contributes to dehydroabietinal-dependent (DA, a diterpenoid tricyclic diterpene) activation of flowering ans SAR. The sequence is that of WD-40 repeat-containing protein MSI4 from Arabidopsis thaliana (Mouse-ear cress).